Consider the following 32-residue polypeptide: Seminal plasma protein PDC-109 (32 aa).

Residues 1–32 (DQDEGVSTEPTQVGPAELHNDETCVGPLVYRN) form a disordered region. Threonine 11 is a glycosylation site (O-linked (GalNAc...) threonine). One can recognise a Fibronectin type-II domain in the interval 19 to 32 (HNDETCVGPLVYRN).

It belongs to the seminal plasma protein family. As to quaternary structure, homodimer.

The protein resides in the secreted. Functionally, could enhance the fertilizing capacity of bull spermatozoa upon interaction with heparin-like glycosaminoglycans present in the female genital tract. Exhibits both simulatory and inhibitory actions on the release of pituitary gonadotropins. Binds to heparin and gelatin. The protein is Seminal plasma protein PDC-109 of Bos indicus (Zebu).